The following is a 78-amino-acid chain: MAIKLRLTRMGSKKRPFYRIVAINSETRRDGRPLDFCGYYNPMVEPVEVKIDKEKVEKWLERGAEPSDTVKSLLKANS.

It belongs to the bacterial ribosomal protein bS16 family.

The protein is Small ribosomal subunit protein bS16 of Maridesulfovibrio salexigens (strain ATCC 14822 / DSM 2638 / NCIMB 8403 / VKM B-1763) (Desulfovibrio salexigens).